We begin with the raw amino-acid sequence, 460 residues long: Ribosomal protein uS12 methylthiotransferase RimO (460 aa).

The MTTase N-terminal domain maps to 16–130 (NKIHFISLGC…ILSAIESKES (115 aa)). 6 residues coordinate [4Fe-4S] cluster: Cys-25, Cys-61, Cys-93, Cys-164, Cys-168, and Cys-171. One can recognise a Radical SAM core domain in the interval 150-382 (STPKHYAYLK…SQTQKKNVEK (233 aa)). Residues 385-455 (KQFVGKIVEA…GYDLVGRVVN (71 aa)) form the TRAM domain.

This sequence belongs to the methylthiotransferase family. RimO subfamily. The cofactor is [4Fe-4S] cluster.

The protein resides in the cytoplasm. The enzyme catalyses L-aspartate(89)-[ribosomal protein uS12]-hydrogen + (sulfur carrier)-SH + AH2 + 2 S-adenosyl-L-methionine = 3-methylsulfanyl-L-aspartate(89)-[ribosomal protein uS12]-hydrogen + (sulfur carrier)-H + 5'-deoxyadenosine + L-methionine + A + S-adenosyl-L-homocysteine + 2 H(+). Catalyzes the methylthiolation of an aspartic acid residue of ribosomal protein uS12. The polypeptide is Ribosomal protein uS12 methylthiotransferase RimO (Chlamydia abortus (strain DSM 27085 / S26/3) (Chlamydophila abortus)).